The chain runs to 249 residues: MDDTGAAPVVIFGGRSQIGGELARRLAAGATMVLAARNADQLADQAAALRAAGAIAVHTREFDADDLAAHGPLVASLVAEHGPIGTAVLAFGILGDQARAETDAAHAVAIVHTDYVAQVSLLTHLAAAMRTAGRGSLVVFSSVAGIRVRRANYVYGSAKAGLDGFASGLADALHGTGVRLLIARPGFVIGRMTEGMTPAPLSVTPERVAAATARALVNGKRVVWIPWALRPMFVALRLLPRFVWRRMPR.

11-34 (IFGGRSQIGGELARRLAAGATMVL) contacts NADP(+). Serine 142 contacts substrate. The Proton acceptor role is filled by tyrosine 155.

Belongs to the short-chain dehydrogenases/reductases (SDR) family.

This is an uncharacterized protein from Mycobacterium tuberculosis (strain ATCC 25618 / H37Rv).